A 432-amino-acid polypeptide reads, in one-letter code: Enolase (432 aa).

Q167 lines the (2R)-2-phosphoglycerate pocket. Catalysis depends on E209, which acts as the Proton donor. Mg(2+) is bound by residues D246, E291, and D318. 4 residues coordinate (2R)-2-phosphoglycerate: K343, R372, S373, and K394. The active-site Proton acceptor is the K343.

This sequence belongs to the enolase family. In terms of assembly, component of the RNA degradosome, a multiprotein complex involved in RNA processing and mRNA degradation. It depends on Mg(2+) as a cofactor.

Its subcellular location is the cytoplasm. It localises to the secreted. It is found in the cell surface. It catalyses the reaction (2R)-2-phosphoglycerate = phosphoenolpyruvate + H2O. It functions in the pathway carbohydrate degradation; glycolysis; pyruvate from D-glyceraldehyde 3-phosphate: step 4/5. In terms of biological role, catalyzes the reversible conversion of 2-phosphoglycerate (2-PG) into phosphoenolpyruvate (PEP). It is essential for the degradation of carbohydrates via glycolysis. The chain is Enolase from Pseudoalteromonas translucida (strain TAC 125).